The sequence spans 390 residues: Succinyl-diaminopimelate desuccinylase (390 aa).

Histidine 74 serves as a coordination point for Zn(2+). Aspartate 76 is an active-site residue. Aspartate 107 provides a ligand contact to Zn(2+). Glutamate 140 acts as the Proton acceptor in catalysis. Glutamate 141, glutamate 169, and histidine 363 together coordinate Zn(2+).

Belongs to the peptidase M20A family. DapE subfamily. As to quaternary structure, homodimer. The cofactor is Zn(2+). Co(2+) serves as cofactor.

It catalyses the reaction N-succinyl-(2S,6S)-2,6-diaminopimelate + H2O = (2S,6S)-2,6-diaminopimelate + succinate. The protein operates within amino-acid biosynthesis; L-lysine biosynthesis via DAP pathway; LL-2,6-diaminopimelate from (S)-tetrahydrodipicolinate (succinylase route): step 3/3. Functionally, catalyzes the hydrolysis of N-succinyl-L,L-diaminopimelic acid (SDAP), forming succinate and LL-2,6-diaminopimelate (DAP), an intermediate involved in the bacterial biosynthesis of lysine and meso-diaminopimelic acid, an essential component of bacterial cell walls. This is Succinyl-diaminopimelate desuccinylase from Bartonella quintana (strain Toulouse) (Rochalimaea quintana).